The following is a 781-amino-acid chain: MSKKSGKWWESDDKFAKAVYQQFVEFYEKVTGTDLELIQILKDHYNISLDNPLENPSSLFDLVARIKNNLKNSPDLYSHHFQSHGQLSDHPHALSSSSSHAEPRGENAVLSSEDLHKPGQVSVQLPGTNYVGPGNELQAGPPQSAVDSAARIHDFRYSQLAKLGINPYTHWTVADEELLKNIKNETGFQAQVVKDYFTLKGAAAPVAHFQGSLPEVPAYNASEKYPSMTSVNSAEASTGAGGGGSNSVKSMWSEGATFSANSVTCTFSRQFLIPYDPEHHYKVFSPAASSCHNASGKEAKVCTISPIMGYSTPWRYLDFNALNLFFSPLEFQHLIENYGSIAPDALTVTISEIAVKDVTDKTGGGVQVTDSTTGRLCMLVDHEYKYPYVLGQGQDTLAPELPIWVYFPPQYAYLTVGDVNTQGISGDSKKLASEESAFYVLEHSSFQLLGTGGTASMSYKFPPVPPENLEGCSQHFYEMYNPLYGSRLGVPDTLGGDPKFRSLTHEDHAIQPQNFMPGPLVNSVSTKEGDSSNTGAGKALTGLSTGTSQNTRISLRPGPVSQPYHHWDTDKYVTGINAISHGQTTYGNAEDKEYQQGVGRFPNEKEQLKQLQGLNMHTYFPNKGTQQYTDQIERPLMVGSVWNRRALHYESQLWSKIPNLDDSFKTQFAALGGWGLHQPPPQIFLKILPQSGPIGGIKSMGITTLVQYAVGIMTVTMTFKLGPRKATGRWNPQPGVYPPHAAGHLPYVLYDPTATDAKQHHRHGYEKPEELWTAKSRVHPL.

Residues 5–80 (SGKWWESDDK…KNSPDLYSHH (76 aa)) are binding to the host cell receptor and internalization. The tract at residues 77–111 (YSHHFQSHGQLSDHPHALSSSSSHAEPRGENAVLS) is disordered. The tract at residues 130-175 (YVGPGNELQAGPPQSAVDSAARIHDFRYSQLAKLGINPYTHWTVAD) is phospholipase A2-like. Composition is skewed to polar residues over residues 524–535 (VSTKEGDSSNTG) and 542–553 (GLSTGTSQNTRI). Positions 524–561 (VSTKEGDSSNTGAGKALTGLSTGTSQNTRISLRPGPVS) are disordered. Residues 720–730 (KLGPRKATGRW) carry the Nuclear localization signal motif. The disordered stretch occupies residues 761–781 (HRHGYEKPEELWTAKSRVHPL).

Belongs to the parvoviridae capsid protein family. In terms of assembly, heteromultimer of isoform Minor capsid protein VP1 and isoform Major capsid protein VP2. As to quaternary structure, heteromultimer of isoform Minor capsid protein VP1 and isoform Major capsid protein VP2. 20 fold more abundant than the minor capsid protein VP1.

The protein localises to the virion. Its subcellular location is the host nucleus. It localises to the host cytoplasm. The catalysed reaction is a 1,2-diacyl-sn-glycero-3-phosphocholine + H2O = a 1-acyl-sn-glycero-3-phosphocholine + a fatty acid + H(+). Functionally, capsid protein self-assembles to form an icosahedral capsid with a T=1 symmetry, about 20 nm in diameter, and consisting of 60 copies of two size variants of the capsid proteins, VP1 and VP2, which differ by the presence of an N-terminal extension in the minor protein VP1. The capsid encapsulates the genomic ssDNA. Binds to erythroid progenitor cells expressing high levels of P antigen and uses host ITGA5-ITGB1 and XRCC5/Ku80 autoantigen as coreceptors on the cell surface to provide virion attachment to target cell. This attachment induces virion internalization predominantly through clathrin-dependent endocytosis. Binding to the host receptors also induces capsid rearrangements leading to surface exposure of VP1 N-terminus, specifically its phospholipase A2-like region. The additional N-terminal region of isoform Minor capsid protein VP1, called VP1u, may serve as a lipolytic enzyme to breach the endosomal membrane during entry into host cell and might contribute to virus transport to the nucleus. The chain is Minor capsid protein VP1 from Homo sapiens (Human).